Here is a 274-residue protein sequence, read N- to C-terminus: Orotidine 5'-phosphate decarboxylase (274 aa).

Substrate contacts are provided by residues Asp40, 62 to 64 (KTH), 93 to 102 (DRKFIDIGNT), Tyr227, and Arg245. Lys95 (proton donor) is an active-site residue.

It belongs to the OMP decarboxylase family.

The enzyme catalyses orotidine 5'-phosphate + H(+) = UMP + CO2. It participates in pyrimidine metabolism; UMP biosynthesis via de novo pathway; UMP from orotate: step 2/2. This Emericella nidulans (strain FGSC A4 / ATCC 38163 / CBS 112.46 / NRRL 194 / M139) (Aspergillus nidulans) protein is Orotidine 5'-phosphate decarboxylase (pyrG).